The following is a 92-amino-acid chain: YcgL domain-containing protein PBPRA1080 (92 aa).

The YcgL domain occupies 1 to 84 (MLCSIYKSSK…PVTNLLHQYK (84 aa)).

The polypeptide is YcgL domain-containing protein PBPRA1080 (Photobacterium profundum (strain SS9)).